Consider the following 134-residue polypeptide: MSYIKRDHTALRDIAMKTFLKVVGLAASLSAASVAFSSYQLIIKNNYNQTVAISLFDDQGGTHDAGEVEANGQTKITAHLDQASGFCLNVAGKREVVCSYKSGSHPNGTITIDSTGRYCIYNNTKKISGGHGCG.

A signal peptide spans 1 to 37 (MSYIKRDHTALRDIAMKTFLKVVGLAASLSAASVAFS).

This is an uncharacterized protein from Coxiella burnetii (strain RSA 493 / Nine Mile phase I).